The following is an 87-amino-acid chain: MRLSEAIKHLAVRAVDSESPVDILPAEVVSVSPVEIRLNENDKLIIPADLIIVPKRLRAGEEALNTGERVMIVSLKGGQSFFILDKI.

To B.subtilis XkdR.

This is an uncharacterized protein from Bacillus subtilis (strain 168).